Consider the following 565-residue polypeptide: MKSPAPSRPQKMALIPACIFLCFAALSVQAEETPVTPQPPDILLGPLFNDVQNVKLFPDQKTFADAVPNSDPLMILADYRMQQNQSGFDLRHFVNVNFTLPKEGEKYVPPEGQSLREHIDGLWPVLTRSTENTEKWDSLLPLPEPYVVPGGRFREVYYWDNYFTMLGLAESGHWDKVADMVANFAHEINTYGHIPNGNRSYYLSRSQPPFFALMVELLAQHEGDAALKQYLPQMQKEYAYWMDGVENLQAGQQEKRVVKLQDSTLLNRYWDDRDTPRPESWVEDIATAKSNPNRPATEIYRDLRSAAASGWDFSSRWMDNPQQLNTLRTTSIVPVDLNSLMFKMEKILARASKAAGDNAMANQYETLANARQKGIEKYLWNDQQGWYADYDLKSHKVRNQLTAAALFPLYVNAAAKDRANKMATATKTHLLQPGGLNTTSVKSGQQWDAPNGWAPLQWVATEGLQNYGQKEVAMDISWHFLTNVQHTYDREKKLVEKYDVSTTGTGGGGGEYPLQDGFGWTNGVTLKMLDLICPKEQPCDNVPATHPTVKSATTQPSTKEAQPTP.

The signal sequence occupies residues 1–30 (MKSPAPSRPQKMALIPACIFLCFAALSVQA). Residues Arg152, 159–160 (WD), Asn196, 205–207 (RSQ), 277–279 (RPE), and Gly310 contribute to the substrate site. Catalysis depends on proton donor/acceptor residues Asp312 and Glu496. Glu511 contacts substrate. A disordered region spans residues 540-565 (DNVPATHPTVKSATTQPSTKEAQPTP). Residues 548–565 (TVKSATTQPSTKEAQPTP) are compositionally biased toward polar residues.

Belongs to the glycosyl hydrolase 37 family. As to quaternary structure, monomer.

The protein resides in the periplasm. The catalysed reaction is alpha,alpha-trehalose + H2O = alpha-D-glucose + beta-D-glucose. Provides the cells with the ability to utilize trehalose at high osmolarity by splitting it into glucose molecules that can subsequently be taken up by the phosphotransferase-mediated uptake system. The chain is Periplasmic trehalase from Shigella flexneri.